The primary structure comprises 338 residues: Heat-inducible transcription repressor HrcA (338 aa).

It belongs to the HrcA family.

In terms of biological role, negative regulator of class I heat shock genes (grpE-dnaK-dnaJ and groELS operons). Prevents heat-shock induction of these operons. This is Heat-inducible transcription repressor HrcA from Polaromonas sp. (strain JS666 / ATCC BAA-500).